Reading from the N-terminus, the 155-residue chain is MSRRGTVEEKTAKSDPIYRNRLVNMLVNRILKHGKKSLAYQILYRAVKKIQQKTETNPLSVLRQAIRGVTPDIAVKARRVGGSTHQVPIEIGSTQGKALAIRWLLGAARKRPGRNMAFKLSSELVDAAKGSGDAIRKKEETHRMAEANRAFAHFR.

The protein belongs to the universal ribosomal protein uS7 family. In terms of assembly, part of the 30S ribosomal subunit.

The protein resides in the plastid. Its subcellular location is the chloroplast. Functionally, one of the primary rRNA binding proteins, it binds directly to 16S rRNA where it nucleates assembly of the head domain of the 30S subunit. The protein is Small ribosomal subunit protein uS7c of Beta vulgaris (Sugar beet).